The chain runs to 274 residues: Large ribosomal subunit protein uL2cz/uL2cy (274 aa).

2 disordered regions span residues 1-23 (MAIH…SKVK) and 224-274 (NPVD…RRSK).

The protein belongs to the universal ribosomal protein uL2 family. Part of the 50S ribosomal subunit.

The protein resides in the plastid. It is found in the chloroplast. The sequence is that of Large ribosomal subunit protein uL2cz/uL2cy (rpl2-A) from Lactuca sativa (Garden lettuce).